The primary structure comprises 280 residues: Pantothenate synthetase (280 aa).

26–33 (MGNLHEGH) serves as a coordination point for ATP. Residue His33 is the Proton donor of the active site. Residue Gln57 coordinates (R)-pantoate. Residue Gln57 coordinates beta-alanine. 145–148 (GKKD) contributes to the ATP binding site. (R)-pantoate is bound at residue Gln151. Residues Val174 and 182–185 (LSSR) each bind ATP.

Belongs to the pantothenate synthetase family. As to quaternary structure, homodimer.

It is found in the cytoplasm. The enzyme catalyses (R)-pantoate + beta-alanine + ATP = (R)-pantothenate + AMP + diphosphate + H(+). Its pathway is cofactor biosynthesis; (R)-pantothenate biosynthesis; (R)-pantothenate from (R)-pantoate and beta-alanine: step 1/1. Catalyzes the condensation of pantoate with beta-alanine in an ATP-dependent reaction via a pantoyl-adenylate intermediate. In Bordetella avium (strain 197N), this protein is Pantothenate synthetase.